A 1014-amino-acid chain; its full sequence is Calcium-transporting ATPase 2, plasma membrane-type (1014 aa).

Met1 is modified (N-acetylmethionine). Residues 1–160 (MESYLNENFD…NKFAESEMRG (160 aa)) lie on the Cytoplasmic side of the membrane. Positions 20 to 31 (VLEKWRNLCGVV) are interaction with calmodulin. A Phosphoserine; by CPK1 modification is found at Ser45. A helical transmembrane segment spans residues 161–181 (FWVFVWEALQDMTLMILGVCA). The Lumenal segment spans residues 182-199 (FVSLIVGIATEGWPKGSH). A helical membrane pass occupies residues 200–220 (DGLGIAASILLVVFVTATSDY). Residues 221–348 (RQSLQFRDLD…DDETPLQVKL (128 aa)) are Cytoplasmic-facing. Residues 349-368 (NGVATIIGKIGLFFAVVTFA) form a helical membrane-spanning segment. At 369–398 (VLVQGMFMRKLSTGTHWVWSGDEALELLEY) the chain is on the lumenal side. A helical membrane pass occupies residues 399-416 (FAIAVTIVVVAVPEGLPL). Residues 417 to 810 (AVTLSLAFAM…KWGRSVYINI (394 aa)) are Cytoplasmic-facing. Asp454 serves as the catalytic 4-aspartylphosphate intermediate. 2 residues coordinate Mg(2+): Asp755 and Asp759. A helical transmembrane segment spans residues 811–829 (QKFVQFQLTVNVVALVVNF). Residues 830 to 840 (SSACLTGSAPL) are Lumenal-facing. A helical transmembrane segment spans residues 841–861 (TAVQLLWVNMIMDTLGALALA). Over 862 to 881 (TEPPNDELMKRLPVGRRGNF) the chain is Cytoplasmic. The chain crosses the membrane as a helical span at residues 882–904 (ITNAMWRNILGQAVYQFIVIWIL). The Lumenal portion of the chain corresponds to 905–916 (QAKGKAMFGLDG). Residues 917–938 (PDSTLMLNTLIFNCFVFCQVFN) form a helical membrane-spanning segment. Residues 939-956 (EISSREMEEIDVFKGILD) lie on the Cytoplasmic side of the membrane. The helical transmembrane segment at 957-978 (NYVFVVVIGATVFFQIIIIEFL) threads the bilayer. Residues 979-988 (GTFASTTPLT) are Lumenal-facing. Residues 989–1010 (ITQWIFSIFIGFLGMPIAAGLK) form a helical membrane-spanning segment. The Cytoplasmic segment spans residues 1011–1014 (TIPV).

The protein belongs to the cation transport ATPase (P-type) (TC 3.A.3) family. Type IIB subfamily.

It localises to the endoplasmic reticulum membrane. It carries out the reaction Ca(2+)(in) + ATP + H2O = Ca(2+)(out) + ADP + phosphate + H(+). Activated by calmodulin. Its function is as follows. This magnesium-dependent enzyme catalyzes the hydrolysis of ATP coupled with the translocation of calcium from the cytosol into the endoplasmic reticulum. The sequence is that of Calcium-transporting ATPase 2, plasma membrane-type (ACA2) from Arabidopsis thaliana (Mouse-ear cress).